The chain runs to 870 residues: MDSTKEKCDSYKDDLLLRMGLNDNKAGMEGLDKEKINKIIMEATKGSRFYGNELKKEKQVNQRIENMMQQKAQITSQQLRKAQLQVDRFAMELEQSRNLSNTIVHIDMDAFYAAVEMRDNPELKDKPIAVGSMSMLSTSNYHARRFGVRAAMPGFIAKRLCPQLIIVPPNFDKYRAVSKEVKEILADYDPNFMAMSLDEAYLNITKHLEERQNWPEDKRRYFIKMGSSVENDNPGKEVNKLSEHERSISPLLFEESPSDVQPPGDPFQVNFEEQNNPQILQNSVVFGTSAQEVVKEIRFRIEQKTTLTASAGIAPNTMLAKVCSDKNKPNGQYQILPNRQAVMDFIKDLPIRKVSGIGKVTEKMLKALGIITCTELYQQRALLSLLFSETSWHYFLHISLGLGSTHLTRDGERKSMSVERTFSEINKAEEQYSLCQELCSELAQDLQKERLKGRTVTIKLKNVNFEVKTRASTVSSVVSTAEEIFAIAKELLKTEIDADFPHPLRLRLMGVRISSFPNEEDRKHQQRSIIGFLQAGNQALSATECTLEKTDKDKFVKPLEMSHKKSFFDKKRSERKWSHQDTFKCEAVNKQSFQTSQPFQVLKKKMNENLEISENSDDCQILTCPVCFRAQGCISLEALNKHVDECLDGPSISENFKMFSCSHVSATKVNKKENVPASSLCEKQDYEAHPKIKEISSVDCIALVDTIDNSSKAESIDALSNKHSKEECSSLPSKSFNIEHCHQNSSSTVSLENEDVGSFRQEYRQPYLCEVKTGQALVCPVCNVEQKTSDLTLFNVHVDVCLNKSFIQELRKDKFNPVNQPKESSRSTGSSSGVQKAVTRTKRPGLMTKYSTSKKIKPNNPKHTLDIFFK.

The region spanning 103–358 (IVHIDMDAFY…LPIRKVSGIG (256 aa)) is the UmuC domain. 3 residues coordinate Mg(2+): aspartate 107, aspartate 198, and glutamate 199. UBZ4-type zinc fingers lie at residues 621–651 (ILTCPVCFRAQGCISLEALNKHVDECLDGPS) and 776–806 (ALVCPVCNVEQKTSDLTLFNVHVDVCLNKSF). The Zn(2+) site is built by cysteine 624, cysteine 627, histidine 642, cysteine 646, cysteine 779, cysteine 782, histidine 797, and cysteine 801. The interval 816-858 (NPVNQPKESSRSTGSSSGVQKAVTRTKRPGLMTKYSTSKKIKP) is disordered.

This sequence belongs to the DNA polymerase type-Y family. In terms of assembly, interacts with REV1. Interacts with PCNA. The cofactor is Mg(2+). Mn(2+) is required as a cofactor. In terms of tissue distribution, detected at low levels in testis, spleen, prostate and ovary. Detected at very low levels in kidney, colon, brain, heart, liver, lung, placenta, pancreas and peripheral blood leukocytes.

It localises to the nucleus. The catalysed reaction is DNA(n) + a 2'-deoxyribonucleoside 5'-triphosphate = DNA(n+1) + diphosphate. DNA polymerase specifically involved in DNA repair. Plays an important role in translesion synthesis, where the normal high-fidelity DNA polymerases cannot proceed and DNA synthesis stalls. Depending on the context, it inserts the correct base, but causes frequent base transitions, transversions and frameshifts. Lacks 3'-5' proofreading exonuclease activity. Forms a Schiff base with 5'-deoxyribose phosphate at abasic sites, but does not have lyase activity. The protein is DNA polymerase kappa (POLK) of Homo sapiens (Human).